Reading from the N-terminus, the 285-residue chain is 2,3,4,5-tetrahydropyridine-2,6-dicarboxylate N-succinyltransferase (285 aa).

Positions 111 and 148 each coordinate substrate.

This sequence belongs to the transferase hexapeptide repeat family. Homotrimer.

The protein localises to the cytoplasm. The catalysed reaction is (S)-2,3,4,5-tetrahydrodipicolinate + succinyl-CoA + H2O = (S)-2-succinylamino-6-oxoheptanedioate + CoA. It functions in the pathway amino-acid biosynthesis; L-lysine biosynthesis via DAP pathway; LL-2,6-diaminopimelate from (S)-tetrahydrodipicolinate (succinylase route): step 1/3. The sequence is that of 2,3,4,5-tetrahydropyridine-2,6-dicarboxylate N-succinyltransferase from Rhizobium rhizogenes (strain K84 / ATCC BAA-868) (Agrobacterium radiobacter).